The primary structure comprises 449 residues: MESRGKHRLKKNGESKENLGEHEQARIGFHRNGDSADSLSSPVAEPNFSSPGGRSSNSILHCPPQSPEQGNNLDCLVGEELQFLWPRLQCLQHTLSNLPLSEGLKPLMNFETVEDLAALAGKGLLQELKHDYEILCKSLNSAAPLLSPEGNCESLNYSLQPLIAIVYGPTGSGKSQLLRNLLSCHLIDPSPETVFFVVPQIDMIPPQEMSAWNAQLVEGNYTCGPQQTIVPKSGTLKPRLITLTYDDLTADHNYDVTHPQNIFAQAAQRGPICIIVDECMEELGKHKSIAKFFHAFPSKLHDRFPQCTGYSVFVVLHNMNPRKDQAGNIATLKIQSKCHIISPKMQPSQVARFINTYTKAMPTAITLLLKDIFHHNANHINYDWIIYNTSPEHECMQWMYLHPQNGLMPMYLNVQTILYQLLEKIDKVLRQRQRWNTAYSKKCDKLANK.

Residues 1 to 10 are compositionally biased toward basic residues; it reads MESRGKHRLK. The interval 1–64 is disordered; the sequence is MESRGKHRLK…SSNSILHCPP (64 aa). The span at 11 to 25 shows a compositional bias: basic and acidic residues; it reads KNGESKENLGEHEQA. Over residues 35 to 59 the composition is skewed to polar residues; that stretch reads SADSLSSPVAEPNFSSPGGRSSNSI. Position 168–175 (168–175) interacts with ATP; the sequence is GPTGSGKS. Residues 437 to 449 are DNA-binding; the sequence is TAYSKKCDKLANK.

Belongs to the adenoviridae packaging protein 1 family. As to quaternary structure, homodimer. Part of a genome packaging complex composed of packaging proteins 1, 2 and 3; this complex specifically binds to the packaging sequence on the left end of viral genomic DNA and performs packaging of the viral genome. Interacts with protein 33K.

It localises to the virion. The protein localises to the host nucleus. It is found in the host nucleoplasm. Its subcellular location is the host nucleolus. Its function is as follows. Component of the packaging machinery which encapsidates the viral DNA into preformed capsids and transcriptional activator of the viral major late promoter (MLP). Binds, along with packaging proteins 2 and 3, to the specific packaging sequence on the left end of viral genomic DNA and displays ATPase activity thereby providing the power stroke of the packaging machinery. The activity of packaging protein IVa2 is stimulated by protein 33K which acts as a terminase. May be the protein that pumps DNA into the capsid powered by ATP hydrolysis. Specifically binds to the 5'-CG-3' nucleotides of the repeats making up the packaging sequence. Component of the DEF-A and DEF-B transcription factors that bind downstream elements of the major late promoter (MLP), and stimulate transcription from the MLP after initiation of viral DNA replication. DEF-A is a heterodimer packaging proteins 1 and 2 and DEF-B is a homodimer of packaging protein 1. In Mus musculus (Mouse), this protein is Packaging protein 1.